Reading from the N-terminus, the 209-residue chain is Kynurenine formamidase (209 aa).

Substrate is bound at residue phenylalanine 18. Residues histidine 48, histidine 52, and aspartate 54 each contribute to the Zn(2+) site. Histidine 58 serves as the catalytic Proton donor/acceptor. 2 residues coordinate Zn(2+): histidine 160 and glutamate 172.

This sequence belongs to the Cyclase 1 superfamily. KynB family. In terms of assembly, homodimer. The cofactor is Zn(2+).

The catalysed reaction is N-formyl-L-kynurenine + H2O = L-kynurenine + formate + H(+). Its pathway is amino-acid degradation; L-tryptophan degradation via kynurenine pathway; L-kynurenine from L-tryptophan: step 2/2. In terms of biological role, catalyzes the hydrolysis of N-formyl-L-kynurenine to L-kynurenine, the second step in the kynurenine pathway of tryptophan degradation. This is Kynurenine formamidase from Bordetella petrii (strain ATCC BAA-461 / DSM 12804 / CCUG 43448).